The chain runs to 614 residues: Threonine--tRNA ligase (614 aa).

Residues 1-141 (MRLLLIHSDY…LSKTIVPGEE (141 aa)) are editing domain. The interval 198–490 (AHVDLMRSKE…ISTQKVPALP (293 aa)) is catalytic. The Zn(2+) site is built by cysteine 290, histidine 342, and histidine 463.

The protein belongs to the class-II aminoacyl-tRNA synthetase family. In terms of assembly, homodimer. The cofactor is Zn(2+).

It localises to the cytoplasm. It catalyses the reaction tRNA(Thr) + L-threonine + ATP = L-threonyl-tRNA(Thr) + AMP + diphosphate + H(+). Its function is as follows. Catalyzes the attachment of threonine to tRNA(Thr) in a two-step reaction: L-threonine is first activated by ATP to form Thr-AMP and then transferred to the acceptor end of tRNA(Thr). Also edits incorrectly charged L-seryl-tRNA(Thr). In Methanoregula boonei (strain DSM 21154 / JCM 14090 / 6A8), this protein is Threonine--tRNA ligase.